Reading from the N-terminus, the 419-residue chain is G protein-activated inward rectifier potassium channel 4 (419 aa).

Over 1–86 (MAGDSRNAMN…LFTTLVDLKW (86 aa)) the chain is Cytoplasmic. Residue Ser5 is modified to Phosphoserine. Residues 87–111 (RFNLLVFTMVYTITWLFFGFIWWLI) form a helical membrane-spanning segment. Over 112–135 (AYVRGDLDHVGDQEWIPCVENLSG) the chain is Extracellular. The helical; Pore-forming intramembrane region spans 136-147 (FVSAFLFSIETE). The pore-forming intramembrane region spans 148–154 (TTIGYGF). Positions 149–154 (TIGYGF) match the Selectivity filter motif. At 155–163 (RVITEKCPE) the chain is on the extracellular side. Residues 164–185 (GIILLLVQAILGSIVNAFMVGC) form a helical membrane-spanning segment. Topologically, residues 186–419 (MFVKISQPKK…SVSRATRGSM (234 aa)) are cytoplasmic. Low complexity predominate over residues 380–390 (LPSPPLLGGCA). Residues 380–419 (LPSPPLLGGCAEAEKEAEAEHDEEEEPNGLSVSRATRGSM) are disordered. A compositionally biased stretch (polar residues) spans 409-419 (LSVSRATRGSM).

It belongs to the inward rectifier-type potassium channel (TC 1.A.2.1) family. KCNJ5 subfamily. Associates with KCNJ3/GIRK1 or KCNJ6/GRIK2 to form a G-protein-activated heteromultimer pore-forming unit. The resulting inward current is much larger. In terms of tissue distribution, most abundant in heart tissue where it is found predominantly in atria. Also found in brain, kidney, liver, spleen, lung and thymus.

The protein localises to the membrane. The catalysed reaction is K(+)(in) = K(+)(out). Heteromultimer composed of KCNJ3/GIRK1 and KCNJ5/GIRK4 is activated by phosphatidylinositol 4,5 biphosphate (PtdIns(4,5)P2). Functionally, inward rectifier potassium channels are characterized by a greater tendency to allow potassium to flow into the cell rather than out of it. Their voltage dependence is regulated by the concentration of extracellular potassium; as external potassium is raised, the voltage range of the channel opening shifts to more positive voltages. The inward rectification is mainly due to the blockage of outward current by internal magnesium. Can be blocked by external barium. This potassium channel is controlled by G proteins. The sequence is that of G protein-activated inward rectifier potassium channel 4 (Kcnj5) from Rattus norvegicus (Rat).